A 179-amino-acid polypeptide reads, in one-letter code: Probable WRKY transcription factor 24 (179 aa).

Residues S92–E157 constitute a DNA-binding region (WRKY).

The protein belongs to the WRKY group II-c family.

Its subcellular location is the nucleus. In terms of biological role, transcription factor. Interacts specifically with the W box (5'-(T)TGAC[CT]-3'), a frequently occurring elicitor-responsive cis-acting element. The polypeptide is Probable WRKY transcription factor 24 (WRKY24) (Arabidopsis thaliana (Mouse-ear cress)).